We begin with the raw amino-acid sequence, 134 residues long: Protein LctB (134 aa).

In Geobacillus stearothermophilus (Bacillus stearothermophilus), this protein is Protein LctB (lctB).